The sequence spans 424 residues: Histidine--tRNA ligase (424 aa).

The protein belongs to the class-II aminoacyl-tRNA synthetase family. In terms of assembly, homodimer.

The protein localises to the cytoplasm. The enzyme catalyses tRNA(His) + L-histidine + ATP = L-histidyl-tRNA(His) + AMP + diphosphate + H(+). The sequence is that of Histidine--tRNA ligase from Salmonella dublin (strain CT_02021853).